The following is a 688-amino-acid chain: Transcriptional regulatory protein GAT1 (688 aa).

5 disordered regions span residues 83–125 (NHNS…SPMI), 259–278 (TSAS…NNSS), 343–438 (FTGI…GVSC), 482–565 (IKKR…NLDK), and 639–678 (LMTM…TANN). Positions 259–271 (TSASITSPTSTFS) are enriched in low complexity. Positions 359–368 (FDNKPKDDHF) are enriched in basic and acidic residues. Residues 369 to 379 (NTSLSVSQQQP) show a composition bias toward polar residues. The span at 382–397 (KKSKRKSTITKSKKKA) shows a compositional bias: basic residues. Positions 402–428 (TTITSTGSTITTKSTNSNSTGKGTATG) are enriched in low complexity. Residues 438-462 (CTNCGTKTTPLWRRNPQGQPLCNAC) form a GATA-type zinc finger. Low complexity-rich tracts occupy residues 488-510 (GNNN…NNKS), 529-543 (TNNT…SKSP), 552-565 (FDNN…NLDK), 639-654 (LMTM…LSTT), and 662-678 (NNEG…TANN).

The protein localises to the nucleus. Transcriptional regulator of nitrogen utilization required for nitrogen catabolite repression and utilization of isoleucine, tyrosine and tryptophan as nitrogen sources. Controls expression of the MEP2 ammonium permease, the DUR1,2 urea amidolyase, and the transcription factor STP1, which in turn mediates SAP2 expression, a long-known virulence attribute of C.albicans. Influences the filamentation process depending upon the nitrogen sources available. Required for virulence in a mouse systemic infection model. The polypeptide is Transcriptional regulatory protein GAT1 (GAT1) (Candida albicans (strain SC5314 / ATCC MYA-2876) (Yeast)).